The sequence spans 285 residues: MDILLLVKAAIMGIVEGLTEFLPISSTGHLILTASLLNFTGEIVKVFDIAIQTGAMFAVIWEYRVRLRATVAGITHEAVAQRFVRNLLIAFVPAVISGLALGGLIKEHLFHPVPVATAFVVGGLIILWVERRHRALFGDRDLEGGRVARVETIDDMSALDALKVGLVQCAALIPGTSRSGATIIGAMLFGFSRKAATEFSFFLGIPTLMGAGAYSLIKQRDLLSWGDLPVFAVGVVFAFLSALVCIRWLIRYVSTHDFTVFAWYRIAFGGLVLLSAWGGWVDWKD.

A run of 7 helical transmembrane segments spans residues 3-23 (ILLL…EFLP), 41-61 (GEIV…AVIW), 87-107 (LLIA…LIKE), 109-129 (LFHP…ILWV), 197-217 (TEFS…YSLI), 226-246 (GDLP…LVCI), and 260-280 (VFAW…WGGW).

This sequence belongs to the UppP family.

Its subcellular location is the cell inner membrane. The enzyme catalyses di-trans,octa-cis-undecaprenyl diphosphate + H2O = di-trans,octa-cis-undecaprenyl phosphate + phosphate + H(+). In terms of biological role, catalyzes the dephosphorylation of undecaprenyl diphosphate (UPP). Confers resistance to bacitracin. In Methylibium petroleiphilum (strain ATCC BAA-1232 / LMG 22953 / PM1), this protein is Undecaprenyl-diphosphatase.